We begin with the raw amino-acid sequence, 390 residues long: Putative transposase YncI (390 aa).

This sequence belongs to the transposase 11 family.

The polypeptide is Putative transposase YncI (yncI) (Escherichia coli O157:H7).